A 570-amino-acid chain; its full sequence is Sulfite reductase [NADPH] hemoprotein beta-component (570 aa).

Residues Cys434, Cys440, Cys479, and Cys483 each contribute to the [4Fe-4S] cluster site. Cys483 is a siroheme binding site.

It belongs to the nitrite and sulfite reductase 4Fe-4S domain family. Alpha(8)-beta(8). The alpha component is a flavoprotein, the beta component is a hemoprotein. Siroheme serves as cofactor. [4Fe-4S] cluster is required as a cofactor.

The catalysed reaction is hydrogen sulfide + 3 NADP(+) + 3 H2O = sulfite + 3 NADPH + 4 H(+). It participates in sulfur metabolism; hydrogen sulfide biosynthesis; hydrogen sulfide from sulfite (NADPH route): step 1/1. In terms of biological role, component of the sulfite reductase complex that catalyzes the 6-electron reduction of sulfite to sulfide. This is one of several activities required for the biosynthesis of L-cysteine from sulfate. In Shigella boydii serotype 4 (strain Sb227), this protein is Sulfite reductase [NADPH] hemoprotein beta-component.